Reading from the N-terminus, the 212-residue chain is Ribosomal RNA small subunit methyltransferase G (212 aa).

S-adenosyl-L-methionine contacts are provided by residues G80, L85, 131-132, and R146; that span reads VE.

This sequence belongs to the methyltransferase superfamily. RNA methyltransferase RsmG family.

Its subcellular location is the cytoplasm. It carries out the reaction guanosine(527) in 16S rRNA + S-adenosyl-L-methionine = N(7)-methylguanosine(527) in 16S rRNA + S-adenosyl-L-homocysteine. Functionally, specifically methylates the N7 position of guanine in position 527 of 16S rRNA. The protein is Ribosomal RNA small subunit methyltransferase G of Azoarcus sp. (strain BH72).